A 227-amino-acid chain; its full sequence is 2,3-bisphosphoglycerate-dependent phosphoglycerate mutase (227 aa).

Substrate is bound by residues 7–14 (RHGQSEWN), 20–21 (TG), Arg-59, 86–89 (ERHY), Lys-97, 113–114 (RR), and 182–183 (GN). His-8 serves as the catalytic Tele-phosphohistidine intermediate. The active-site Proton donor/acceptor is Glu-86.

The protein belongs to the phosphoglycerate mutase family. BPG-dependent PGAM subfamily. As to quaternary structure, homodimer.

The enzyme catalyses (2R)-2-phosphoglycerate = (2R)-3-phosphoglycerate. It participates in carbohydrate degradation; glycolysis; pyruvate from D-glyceraldehyde 3-phosphate: step 3/5. In terms of biological role, catalyzes the interconversion of 2-phosphoglycerate and 3-phosphoglycerate. The polypeptide is 2,3-bisphosphoglycerate-dependent phosphoglycerate mutase (Neisseria meningitidis serogroup B (strain ATCC BAA-335 / MC58)).